A 294-amino-acid chain; its full sequence is ATP synthase gamma chain (294 aa).

Belongs to the ATPase gamma chain family. In terms of assembly, F-type ATPases have 2 components, CF(1) - the catalytic core - and CF(0) - the membrane proton channel. CF(1) has five subunits: alpha(3), beta(3), gamma(1), delta(1), epsilon(1). CF(0) has three main subunits: a, b and c.

The protein resides in the cell inner membrane. In terms of biological role, produces ATP from ADP in the presence of a proton gradient across the membrane. The gamma chain is believed to be important in regulating ATPase activity and the flow of protons through the CF(0) complex. This is ATP synthase gamma chain from Nitratiruptor sp. (strain SB155-2).